The primary structure comprises 1620 residues: MSTIGNNASSIGNTPILGSVPSNIAAAPPTTTTTTTTTTTTTTTTPTTTTPTTTTTTTNTLNTMIASTTPLSTTPTNVPIKPPLLINQFGKPLPNLSSTASSPRTPIKPFIGTPNNPSTPSSLIALSSPIGGGGVGSTPFSNQFIGYSGGGGGSSSSSNNSTIAYNGSTPYKPVLTGSGGIGGGGSGSSTPNRGRFSGKTSNIGGGGGLNNLNVGGGVGVIVGGIGNGSSNSGVGGTTTYQASQLVVTNISKGTTTKRSFPIPTNITPPKCPLPNWFTSLDNIHQVEINNLPEFFQDDNENGNGNGNGSGSGSNNMTEIDYDEIDEDEYSYVDSVEYKYIKKKQKLQLSNKELYKIYRDYMITSYQKNPYQYLSVTDVKNHFINQNKKTFKVNIRSIIKIFDFLEYWDLINCFVNSGDYMNIISPGVFNYCNEFYQSFYRKKFKHEEREKEEKERLEREEKERLEREEKQEKEEKERLEKEEKERLEREEKQEKEEKEEKEEKEENEEKEEKEEKEKEEKEEKEKQEKEDDKEKQENENEQEKIEKKENKNDSQNKEIKENHDKKDETTDSNNTTTTTTTTTTTSTNTLVAESSSSSSTETDDNDKEMKEQPVQENKDKEMMETDTTKENNGVETTETTNQTTDSIETDKEMKDQPIINLEKEKSSEDKEINDDHNENEKQDKDKENEKEKEDKTENGNEKENEKENEKENEKENEKENENEKENENEKENENKKEKEKENKKENENENEKVDEKIEIDKEGINEDEKMDEEKEEKINNKKEDEEVESEIKKDKLKENEEVEGEIEGENDEGEVVEEDEDEEMEIEEDEEDEEDEKSKEPKKLTTTKSANDQLIKKKKPLFECKKCKADCSNVRYQLVNNSTALDGNILPEYFYPMIICVNCFSSGNYENFIQSSSFQRIEQHQPEEFGWTDIETLLLLEGIEIFRDNWQEISDYIGGSKTPEQCLTHFIRLPIEDEFLERKISSFPVGSLSKKEIDSNNPFSITYGVNNPIMSLVAFFSSYSQPPLGLLASKAAKVILEILNDPKYQQPSKEELERIQKEKDDKEKEDKEKELKEKESKEKELKEKDDKEKEKEKELKEREDKEKEEDKEAKDKVDKEKEEDKQKQDKEKEEDKEKQEKDKEEDKDKEKEENKEDKEKEGTDKEGKDKEDKEIKEDKEKEEKDKEAIGDHDKSDSTNTTTTKEMEIEKQDSSTSTNKETVEMNQDDHVKIDEKETKENDKKSITEEENQQKDDNDNNNNSHNHNKEIEKDDNKENENEKEKENENKNEKQIENENEKEKDLNNLSESQSSNDQSKSNEQMSSDNQESKENSESNSNTQITSKEQNITTDQSEKPKETPTTTTPATLPATPISESNTTTTNTIVDKENNNETNKTNENNSNNNNTNEENKTAESNNMETVVENNEKKPVDNDDNNNNNNNSNDKMDVDNKNNNNNNNVDKNEKDKDEENEMEEVEEEENDLNDEKKENGVDGVGEEDDDEDVEMETASVDIRKSTTTTTKTSLLMMSPPPPKKSRIPEPNPEYFSEAAIQAATAAAFETIQNESKKYYELEEQEIRDLIRSIVICQIRKLELLWKFYVTYEQSLEKEKDYYEKITKSHLQ.

Over residues 1 to 13 the composition is skewed to polar residues; the sequence is MSTIGNNASSIGN. Disordered regions lie at residues 1-57, 176-204, 294-318, and 450-849; these read MSTI…TTTT, TGSG…SNIG, FFQD…NMTE, and KEEK…TKSA. The segment covering 28-57 has biased composition (low complexity); that stretch reads PPTTTTTTTTTTTTTTTTPTTTTPTTTTTT. The segment covering 177–187 has biased composition (gly residues); it reads GSGGIGGGGSG. An SWIRM domain is found at 310–421; it reads GSGSNNMTEI…CFVNSGDYMN (112 aa). Residues 450–497 are compositionally biased toward basic and acidic residues; that stretch reads KEEKERLEREEKERLEREEKQEKEEKERLEKEEKERLEREEKQEKEEK. A compositionally biased stretch (acidic residues) spans 498–511; that stretch reads EEKEEKEENEEKEE. Positions 512 to 568 are enriched in basic and acidic residues; that stretch reads KEEKEKEEKEEKEKQEKEDDKEKQENENEQEKIEKKENKNDSQNKEIKENHDKKDET. Residues 570-598 show a composition bias toward low complexity; the sequence is DSNNTTTTTTTTTTTSTNTLVAESSSSSS. Residues 606–628 are compositionally biased toward basic and acidic residues; the sequence is KEMKEQPVQENKDKEMMETDTTK. The span at 629–645 shows a compositional bias: low complexity; sequence ENNGVETTETTNQTTDS. Positions 647 to 798 are enriched in basic and acidic residues; the sequence is ETDKEMKDQP…EIKKDKLKEN (152 aa). Over residues 799–834 the composition is skewed to acidic residues; that stretch reads EEVEGEIEGENDEGEVVEEDEDEEMEIEEDEEDEED. Positions 925 to 977 constitute an SANT domain; sequence PEEFGWTDIETLLLLEGIEIFRDNWQEISDYIGGSKTPEQCLTHFIRLPIEDE. Residues 1049-1506 form a disordered region; that stretch reads QPSKEELERI…DDDEDVEMET (458 aa). Composition is skewed to basic and acidic residues over residues 1051–1195, 1219–1255, and 1264–1302; these read SKEE…DKSD, ETVE…KDDN, and HNKE…EKDL. Positions 1303–1325 are enriched in low complexity; the sequence is NNLSESQSSNDQSKSNEQMSSDN. The segment covering 1338–1350 has biased composition (polar residues); that stretch reads TQITSKEQNITTD. Low complexity-rich tracts occupy residues 1358–1382 and 1390–1416; these read TPTT…TTNT and NETN…ESNN. Composition is skewed to acidic residues over residues 1467-1481 and 1493-1504; these read EENE…ENDL and VGEEDDDEDVEM.

It localises to the nucleus. The sequence is that of Myb-like protein X (mybX) from Dictyostelium discoideum (Social amoeba).